The following is a 258-amino-acid chain: (7aS)-7a-methyl-1,5-dioxo-2,3,5,6,7,7a-hexahydro-1H-indene-carboxyl-CoA hydrolase (258 aa).

This sequence belongs to the enoyl-CoA hydratase/isomerase family.

The catalysed reaction is (7aS)-7a-methyl-1,5-dioxo-2,3,5,6,7,7a-hexahydro-1H-indene-carboxyl-CoA + H2O = (3E)-2-(2-carboxylatoethyl)-3-methyl-6-oxocyclohex-1-ene-1-carboxyl-CoA + H(+). The protein operates within steroid metabolism; cholesterol degradation. Functionally, involved in the final steps of cholesterol and steroid degradation. Catalyzes the hydrolytic ring D opening of (7aS)-7a-methyl-1,5-dioxo-2,3,5,6,7,7a-hexahydro-1H-indene-carboxyl-CoA (HIEC-CoA) to (3E)-2-(2-carboxylatoethyl)-3-methyl-6-oxocyclohex-1-ene-1-carboxyl-CoA (COCHEA-CoA). In Rhodococcus jostii (strain RHA1), this protein is (7aS)-7a-methyl-1,5-dioxo-2,3,5,6,7,7a-hexahydro-1H-indene-carboxyl-CoA hydrolase.